A 147-amino-acid chain; its full sequence is Myoglobin (147 aa).

The Globin domain occupies 2-141; the sequence is ADFDMVLKCW…IIADMEADYK (140 aa). Position 60 (His-60) interacts with nitrite. His-60 provides a ligand contact to O2. Heme b is bound at residue His-89.

It belongs to the globin family. As to quaternary structure, monomeric.

It is found in the cytoplasm. The protein localises to the sarcoplasm. The enzyme catalyses Fe(III)-heme b-[protein] + nitric oxide + H2O = Fe(II)-heme b-[protein] + nitrite + 2 H(+). The catalysed reaction is H2O2 + AH2 = A + 2 H2O. Its function is as follows. Monomeric heme protein which primary function is to store oxygen and facilitate its diffusion within muscle tissues. Reversibly binds oxygen through a pentacoordinated heme iron and enables its timely and efficient release as needed during periods of heightened demand. Depending on the oxidative conditions of tissues and cells, and in addition to its ability to bind oxygen, it also has a nitrite reductase activity whereby it regulates the production of bioactive nitric oxide. Under stress conditions, like hypoxia and anoxia, it also protects cells against reactive oxygen species thanks to its pseudoperoxidase activity. This Gobionotothen gibberifrons (Humped rockcod) protein is Myoglobin (mb).